Here is a 397-residue protein sequence, read N- to C-terminus: Elongation factor Tu (397 aa).

The tr-type G domain occupies 10–206 (KPHVNIGTIG…AVDEYIPTPE (197 aa)). The segment at 19 to 26 (GHVDHGKT) is G1. A GTP-binding site is contributed by 19-26 (GHVDHGKT). Thr26 is a Mg(2+) binding site. The G2 stretch occupies residues 60–64 (GITIS). A G3 region spans residues 81–84 (DCPG). Residues 81–85 (DCPGH) and 136–139 (NKAD) contribute to the GTP site. The tract at residues 136-139 (NKAD) is G4. Positions 174-176 (SAL) are G5.

Belongs to the TRAFAC class translation factor GTPase superfamily. Classic translation factor GTPase family. EF-Tu/EF-1A subfamily. In terms of assembly, monomer.

It localises to the cytoplasm. It catalyses the reaction GTP + H2O = GDP + phosphate + H(+). GTP hydrolase that promotes the GTP-dependent binding of aminoacyl-tRNA to the A-site of ribosomes during protein biosynthesis. The chain is Elongation factor Tu from Clostridium tetani (strain Massachusetts / E88).